Here is a 307-residue protein sequence, read N- to C-terminus: Probable GTP 3',8-cyclase (307 aa).

Positions 4 to 222 (ALGREVRSVR…RTFHSREVYR (219 aa)) constitute a Radical SAM core domain. Residue arginine 13 participates in GTP binding. Residues cysteine 20 and cysteine 24 each coordinate [4Fe-4S] cluster. S-adenosyl-L-methionine is bound at residue tyrosine 26. A [4Fe-4S] cluster-binding site is contributed by cysteine 27. Position 60 (lysine 60) interacts with GTP. S-adenosyl-L-methionine contacts are provided by glycine 64 and serine 112. Lysine 150 contacts GTP. The [4Fe-4S] cluster site is built by cysteine 240 and cysteine 243. 245 to 247 (RIR) provides a ligand contact to GTP. Cysteine 257 provides a ligand contact to [4Fe-4S] cluster.

The protein belongs to the radical SAM superfamily. MoaA family. Requires [4Fe-4S] cluster as cofactor.

The enzyme catalyses GTP + AH2 + S-adenosyl-L-methionine = (8S)-3',8-cyclo-7,8-dihydroguanosine 5'-triphosphate + 5'-deoxyadenosine + L-methionine + A + H(+). It participates in cofactor biosynthesis; molybdopterin biosynthesis. Functionally, catalyzes the cyclization of GTP to (8S)-3',8-cyclo-7,8-dihydroguanosine 5'-triphosphate. The chain is Probable GTP 3',8-cyclase from Methanopyrus kandleri (strain AV19 / DSM 6324 / JCM 9639 / NBRC 100938).